The sequence spans 354 residues: DNA repair protein rhp57 (354 aa).

100–107 (GESGSGKS) is an ATP binding site.

The protein belongs to the RecA family.

The protein resides in the nucleus. In terms of biological role, involved in recombination DNA repair and in the repair of gamma-ray-induced damage. The protein is DNA repair protein rhp57 (rhp57) of Schizosaccharomyces pombe (strain 972 / ATCC 24843) (Fission yeast).